The chain runs to 170 residues: MLSYYAFIFFAKIMEVALMTIRTVLITRGEKLYGSIIGFIEVTIWLYVTSSVLSGIKDDPIRMVVYALGFTCGNYMGCVIEEKLAIGLLTINVITSESDGKRLAEILRDKNVGVTMVDAEGKIEQKKMLIIHAKRKRREEIIRTIEGSDINAMISVNDIKTVYGGYGIRK.

2 helical membrane passes run 1–21 (MLSYYAFIFFAKIMEVALMTI) and 36–56 (IIGFIEVTIWLYVTSSVLSGI).

Belongs to the UPF0316 family.

It localises to the cell membrane. This chain is UPF0316 protein CLJ_B0679, found in Clostridium botulinum (strain 657 / Type Ba4).